Reading from the N-terminus, the 243-residue chain is MNINKQSPIPIYYQIMEQLKTQIKNGELQPDMPLPSEREYAEQFGISRMTVRQALSNLVNEGLLYRLKGRGTFVSKPKMEQALQGLTSFTEDMKSRGMTPGSRLIDYQLIDSTEELAAILGCGHPSSIHKITRVRLANDIPMAIESSHIPFELAGELNESHFQSSIYDHIERYNSIPISRAKQELEPSAATTEEANILGIQKGAPVLLIKRTTYLQNGTAFEHAKSVYRGDRYTFVHYMDRLS.

The HTH gntR-type domain occupies 9–77 (IPIYYQIMEQ…KGRGTFVSKP (69 aa)). Positions 37-56 (EREYAEQFGISRMTVRQALS) form a DNA-binding region, H-T-H motif. Alpha-D-glucosamine 6-phosphate contacts are provided by residues 89 to 90 (FT), 133 to 135 (RVR), Glu145, 165 to 167 (SIY), Glu222, and Tyr228. N-acetyl-D-glucosamine 6-phosphate-binding positions include 89-90 (FT), 133-135 (RVR), Glu145, 165-167 (SIY), Glu222, and Tyr228.

As to quaternary structure, homodimer. Forms dimers via the C-terminal effector-binding domain. At high concentrations, probably forms polymers along the DNA.

Its activity is regulated as follows. Binding to DNA is allosterically inhibited by an effector molecule. Binding of the effector to the C-terminal domain leads to a conformational change that modulates binding to DNA and thereby regulates transcription of the target genes. Glucosamine-6-phosphate (GlcN6P) and/or N-acetylglucosamine-6-phosphate (GlcNAc6P) are putative effectors of NagR. Binding of GlcNAc6P may prevent the protein-protein interactions responsible for polymerization along the DNA, but not the specific DNA binding. Functionally, main transcriptional repressor of genes involved in N-acetylglucosamine (GlcNAc) transport and utilization. Represses the expression of the nagAB and nagP operons by binding directly within their upstream regions. Binds to the DNA consensus sequence 5'-ATTGGTATAGACAACT-3'. Also acts as a weak repressor of mapB expression. This is HTH-type transcriptional repressor NagR from Bacillus subtilis (strain 168).